The chain runs to 567 residues: D-lactate dehydrogenase [cytochrome], mitochondrial (567 aa).

The N-terminal 56 residues, 1-56 (MAFASKFARSKTILSFLRPCRQLHSTPKSTGDVTVLSPVKGRRRLPTCWSSSLFPL), are a transit peptide targeting the mitochondrion. In terms of domain architecture, FAD-binding PCMH-type spans 142–319 (AVNIPDVVVF…TEITLRLQKI (178 aa)).

The protein belongs to the FAD-binding oxidoreductase/transferase type 4 family. As to quaternary structure, homodimer. FAD serves as cofactor. As to expression, expressed in leaves, stems, flowers and roots.

The protein localises to the mitochondrion. It carries out the reaction (R)-lactate + 2 Fe(III)-[cytochrome c] = 2 Fe(II)-[cytochrome c] + pyruvate + 2 H(+). With respect to regulation, inhibited by cyanide ions. In terms of biological role, catalyzes the stereospecific oxidation of D-lactate to pyruvate. Involved in the detoxification of methylglyoxal and D-lactate, but probably not involved in the metabolization of glycolate. In Arabidopsis thaliana (Mouse-ear cress), this protein is D-lactate dehydrogenase [cytochrome], mitochondrial.